A 100-amino-acid polypeptide reads, in one-letter code: Small ribosomal subunit protein uS14c (100 aa).

It belongs to the universal ribosomal protein uS14 family. Part of the 30S ribosomal subunit.

It is found in the plastid. The protein localises to the chloroplast. Binds 16S rRNA, required for the assembly of 30S particles. The chain is Small ribosomal subunit protein uS14c from Platanus occidentalis (Sycamore).